The following is a 306-amino-acid chain: Pantothenate kinase (306 aa).

90 to 97 (GSVAVGKS) contacts ATP.

Belongs to the prokaryotic pantothenate kinase family.

It is found in the cytoplasm. It catalyses the reaction (R)-pantothenate + ATP = (R)-4'-phosphopantothenate + ADP + H(+). The protein operates within cofactor biosynthesis; coenzyme A biosynthesis; CoA from (R)-pantothenate: step 1/5. This is Pantothenate kinase (coaA) from Lactococcus lactis subsp. lactis (strain IL1403) (Streptococcus lactis).